The following is a 189-amino-acid chain: Peptidyl-tRNA hydrolase (189 aa).

Tyr14 is a tRNA binding site. The Proton acceptor role is filled by His19. TRNA-binding residues include Tyr64, Asn66, and Asn112.

It belongs to the PTH family. As to quaternary structure, monomer.

Its subcellular location is the cytoplasm. It carries out the reaction an N-acyl-L-alpha-aminoacyl-tRNA + H2O = an N-acyl-L-amino acid + a tRNA + H(+). Functionally, hydrolyzes ribosome-free peptidyl-tRNAs (with 1 or more amino acids incorporated), which drop off the ribosome during protein synthesis, or as a result of ribosome stalling. Its function is as follows. Catalyzes the release of premature peptidyl moieties from peptidyl-tRNA molecules trapped in stalled 50S ribosomal subunits, and thus maintains levels of free tRNAs and 50S ribosomes. The chain is Peptidyl-tRNA hydrolase from Finegoldia magna (strain ATCC 29328 / DSM 20472 / WAL 2508) (Peptostreptococcus magnus).